Here is a 428-residue protein sequence, read N- to C-terminus: Sporulation kinase C (428 aa).

The next 2 helical transmembrane spans lie at 8-28 (IISI…FYFI) and 36-56 (PVDI…AYYI). Residues 76–147 (LSEEKNRIMD…NTQIQNKASS (72 aa)) enclose the PAS domain. Residues 148-200 (GMFTAKYVTKNGTIFWGEVHYKLYYDRDDQFTGSLGTMSDITERKEAEDELIE) enclose the PAC domain. The 206-residue stretch at 221–426 (GIAHEVRNPL…VFQVVLPLKS (206 aa)) folds into the Histidine kinase domain. Phosphohistidine; by autocatalysis is present on H224.

In terms of assembly, oligomerizes, probably forms homodimers; oligomerization is assisted by FloT. Interacts with FloT. Another study shows only rare colocalization with FloT or FloA membrane assemblies. KinC membrane assemblies are more mobile than FloT membrane assemblies.

It is found in the cell membrane. Its subcellular location is the membrane raft. It carries out the reaction ATP + protein L-histidine = ADP + protein N-phospho-L-histidine.. Functionally, phosphorylates the sporulation-regulatory protein Spo0A a transcription factor that also controls biofilm formation. Requires FloT and FloA for localization to DRMs and for activity. The chain is Sporulation kinase C from Bacillus subtilis (strain 168).